Reading from the N-terminus, the 181-residue chain is GTP cyclohydrolase 1 2 (181 aa).

Belongs to the GTP cyclohydrolase I family. Homomer.

It catalyses the reaction GTP + H2O = 7,8-dihydroneopterin 3'-triphosphate + formate + H(+). The protein operates within cofactor biosynthesis; 7,8-dihydroneopterin triphosphate biosynthesis; 7,8-dihydroneopterin triphosphate from GTP: step 1/1. This is GTP cyclohydrolase 1 2 from Pseudomonas syringae pv. tomato (strain ATCC BAA-871 / DC3000).